The chain runs to 305 residues: Methionyl-tRNA formyltransferase (305 aa).

110-113 (SLLP) provides a ligand contact to (6S)-5,6,7,8-tetrahydrofolate.

The protein belongs to the Fmt family.

It catalyses the reaction L-methionyl-tRNA(fMet) + (6R)-10-formyltetrahydrofolate = N-formyl-L-methionyl-tRNA(fMet) + (6S)-5,6,7,8-tetrahydrofolate + H(+). In terms of biological role, attaches a formyl group to the free amino group of methionyl-tRNA(fMet). The formyl group appears to play a dual role in the initiator identity of N-formylmethionyl-tRNA by promoting its recognition by IF2 and preventing the misappropriation of this tRNA by the elongation apparatus. In Ureaplasma urealyticum serovar 10 (strain ATCC 33699 / Western), this protein is Methionyl-tRNA formyltransferase.